Reading from the N-terminus, the 372-residue chain is Chorismate synthase (372 aa).

Arginine 48 and arginine 54 together coordinate NADP(+). FMN-binding positions include arginine 125–serine 127, asparagine 238–alanine 239, glycine 278, lysine 293–serine 297, and arginine 319.

This sequence belongs to the chorismate synthase family. Homotetramer. It depends on FMNH2 as a cofactor.

The enzyme catalyses 5-O-(1-carboxyvinyl)-3-phosphoshikimate = chorismate + phosphate. Its pathway is metabolic intermediate biosynthesis; chorismate biosynthesis; chorismate from D-erythrose 4-phosphate and phosphoenolpyruvate: step 7/7. Catalyzes the anti-1,4-elimination of the C-3 phosphate and the C-6 proR hydrogen from 5-enolpyruvylshikimate-3-phosphate (EPSP) to yield chorismate, which is the branch point compound that serves as the starting substrate for the three terminal pathways of aromatic amino acid biosynthesis. This reaction introduces a second double bond into the aromatic ring system. This Xylella fastidiosa (strain 9a5c) protein is Chorismate synthase.